The primary structure comprises 94 residues: UPF0235 protein TK0768 (94 aa).

Belongs to the UPF0235 family.

The sequence is that of UPF0235 protein TK0768 from Thermococcus kodakarensis (strain ATCC BAA-918 / JCM 12380 / KOD1) (Pyrococcus kodakaraensis (strain KOD1)).